Reading from the N-terminus, the 430-residue chain is Glutamate-1-semialdehyde 2,1-aminomutase (430 aa).

Lys-265 carries the N6-(pyridoxal phosphate)lysine modification.

This sequence belongs to the class-III pyridoxal-phosphate-dependent aminotransferase family. HemL subfamily. In terms of assembly, homodimer. The cofactor is pyridoxal 5'-phosphate.

It localises to the cytoplasm. The catalysed reaction is (S)-4-amino-5-oxopentanoate = 5-aminolevulinate. It participates in porphyrin-containing compound metabolism; protoporphyrin-IX biosynthesis; 5-aminolevulinate from L-glutamyl-tRNA(Glu): step 2/2. The polypeptide is Glutamate-1-semialdehyde 2,1-aminomutase (Shewanella oneidensis (strain ATCC 700550 / JCM 31522 / CIP 106686 / LMG 19005 / NCIMB 14063 / MR-1)).